Consider the following 77-residue polypeptide: Teretoxin Tsu15.4 (77 aa).

Residues 1–21 form the signal peptide; sequence MTKLTVLLLAILVLLPLATSN. Residues 22–40 constitute a propeptide that is removed on maturation; it reads SAADEALASLSGLLRRAKR.

Contains 4 disulfide bonds. As to expression, expressed by the venom duct.

Its subcellular location is the secreted. The chain is Teretoxin Tsu15.4 from Terebra subulata (Chocolate spotted auger).